Consider the following 585-residue polypeptide: Arginine--tRNA ligase (585 aa).

Residues 126-136 (PNIAKEMHVGH) carry the 'HIGH' region motif.

This sequence belongs to the class-I aminoacyl-tRNA synthetase family. Monomer.

The protein resides in the cytoplasm. The enzyme catalyses tRNA(Arg) + L-arginine + ATP = L-arginyl-tRNA(Arg) + AMP + diphosphate. The chain is Arginine--tRNA ligase from Rippkaea orientalis (strain PCC 8801 / RF-1) (Cyanothece sp. (strain PCC 8801)).